A 447-amino-acid polypeptide reads, in one-letter code: Citrate synthase-like protein oryE (447 aa).

Active-site residues include His-331 and Asp-387.

It belongs to the citrate synthase family.

It functions in the pathway secondary metabolite biosynthesis. In terms of biological role, citrate synthase-like protein; part of the gene cluster that mediates the biosynthesis of oryzines, natural products with an unusual maleidride backbone. The two subunits of the fungal fatty acid synthase oryfasA and oryfasB probably form octenoic acid. This fatty acid is most likely activated by the acyl-CoA ligase oryP to give octenyl-CoA before the citrate synthase-like protein oryE catalyzes condensation with oxaloacetate to form tricarboxylic acid. The next steps of the pathways are conjectural, but a favorite possible route has been proposed, beginning with decarboxylation and concomitant dehydration by the decarboxylase oryM, followed by tautomerization, which may lead to the production of a diene intermediate. Reduction of this diene intermediate could give the known metabolite piliformic acid. On the pathway to oryzine B and oryzine A, however, hydroxylation of the diene by the alpha-ketoglutarate-dependent dioxygenase oryG and lactonisation by the lactonohydrolases oryH or oryL could give oryzine B directly. Finally, enoyl reduction by the dehydrogenase oryD would then convert oryzine B into oryzine A. In Aspergillus oryzae (strain ATCC 42149 / RIB 40) (Yellow koji mold), this protein is Citrate synthase-like protein oryE.